The following is a 245-amino-acid chain: Terpene cyclase esdpB (245 aa).

The next 7 helical transmembrane spans lie at 19-39 (MVAS…VTTI), 48-68 (SGVT…FAVI), 75-95 (IAAL…YVSV), 112-132 (LPVV…ALSM), 140-160 (LYWG…GLLI), 177-197 (FIAS…WPSA), and 208-228 (WLSG…YHIS).

Belongs to the paxB family.

It is found in the membrane. It participates in secondary metabolite biosynthesis; terpenoid biosynthesis. In terms of biological role, terpene cyclase; part of the cluster that mediates the biosynthesis of shearones, diterpenoid pyrones (DPs) which are structurally diverse meroterpenoids consisting of a diterpene linked by a pyrone, and which may exhibit a range of bioactivities. Within the pathway, esdpB takes part to the biosynthesis of the molecular scaffold by catalyzing the cyclization of the prenyl group initiated by protonation and ring-opening of the epoxide to produce the diterpenoid pyrone scaffold. The molecular scaffold is commonly biosynthesized by a series of enzymes including the non-reducing polyketide synthase (NR-PKS) esdpA that generates an alpha-pyrone; the prenyltransferase esdpC that attaches a geranylgeranyl pyrophosphate (GGPP) produced by the GGPP synthase (GGPPS) esdpD onto the pyrone unit; the FAD-dependent monooxygenase esdpE that converts an olefin on the diterpene unit into an epoxide; and the terpene cyclase esdpB that catalyzes the cyclization reactions to give the molecular backbone shearone A. In the modification steps, esdpF oxidizes the hydroxy group to a ketone at C-3 and esdpG then attaches hydroxy groups at both C-11 and C-12. After that, esdpI hydroxylates at C-20 and esdpH hydroxylates at C-6'. The ether bridge is generated by nucleophilic attack of the hydroxy group at C-20 to the carbonyl carbon at C-3. EsdpH can also functions prior to esdpI. The different combinations of these modification enzymes lead to the production of diverse shearone derivatives, shearone I being the end product of the pathway. The alpha-ketoglutarate-dependent dioxygenase esdpJ seems not to be involved in this pathway. The polypeptide is Terpene cyclase esdpB (Penicillium shearii (Eupenicillium shearii)).